The sequence spans 187 residues: Protein GrpE (187 aa).

It belongs to the GrpE family. As to quaternary structure, homodimer.

It is found in the cytoplasm. Its function is as follows. Participates actively in the response to hyperosmotic and heat shock by preventing the aggregation of stress-denatured proteins, in association with DnaK and GrpE. It is the nucleotide exchange factor for DnaK and may function as a thermosensor. Unfolded proteins bind initially to DnaJ; upon interaction with the DnaJ-bound protein, DnaK hydrolyzes its bound ATP, resulting in the formation of a stable complex. GrpE releases ADP from DnaK; ATP binding to DnaK triggers the release of the substrate protein, thus completing the reaction cycle. Several rounds of ATP-dependent interactions between DnaJ, DnaK and GrpE are required for fully efficient folding. The sequence is that of Protein GrpE from Albidiferax ferrireducens (strain ATCC BAA-621 / DSM 15236 / T118) (Rhodoferax ferrireducens).